Here is a 481-residue protein sequence, read N- to C-terminus: Cardiolipin synthase A (481 aa).

The next 2 helical transmembrane spans lie at 10–30 (FFGY…LHAL) and 40–60 (IAWA…YLIF). 2 consecutive PLD phosphodiesterase domains span residues 220 to 247 (VNFR…GDEY) and 394 to 421 (QPGF…DNRS). Catalysis depends on residues H225, K227, D232, H399, K401, and D406.

It belongs to the phospholipase D family. Cardiolipin synthase subfamily. ClsA sub-subfamily.

The protein localises to the cell inner membrane. The catalysed reaction is 2 a 1,2-diacyl-sn-glycero-3-phospho-(1'-sn-glycerol) = a cardiolipin + glycerol. Functionally, catalyzes the reversible phosphatidyl group transfer from one phosphatidylglycerol molecule to another to form cardiolipin (CL) (diphosphatidylglycerol) and glycerol. This is Cardiolipin synthase A from Pseudomonas putida (Arthrobacter siderocapsulatus).